Consider the following 1374-residue polypeptide: DNA-directed RNA polymerase subunit beta' (1374 aa).

Zn(2+)-binding residues include cysteine 71, cysteine 73, cysteine 86, and cysteine 89. Residues aspartate 462, aspartate 464, and aspartate 466 each coordinate Mg(2+). Positions 810, 884, 891, and 894 each coordinate Zn(2+).

Belongs to the RNA polymerase beta' chain family. The RNAP catalytic core consists of 2 alpha, 1 beta, 1 beta' and 1 omega subunit. When a sigma factor is associated with the core the holoenzyme is formed, which can initiate transcription. Requires Mg(2+) as cofactor. Zn(2+) is required as a cofactor.

It catalyses the reaction RNA(n) + a ribonucleoside 5'-triphosphate = RNA(n+1) + diphosphate. DNA-dependent RNA polymerase catalyzes the transcription of DNA into RNA using the four ribonucleoside triphosphates as substrates. The chain is DNA-directed RNA polymerase subunit beta' from Rickettsia massiliae (strain Mtu5).